The chain runs to 126 residues: Large ribosomal subunit protein bL12 (126 aa).

The protein belongs to the bacterial ribosomal protein bL12 family. Homodimer. Part of the ribosomal stalk of the 50S ribosomal subunit. Forms a multimeric L10(L12)X complex, where L10 forms an elongated spine to which 2 to 4 L12 dimers bind in a sequential fashion. Binds GTP-bound translation factors.

Functionally, forms part of the ribosomal stalk which helps the ribosome interact with GTP-bound translation factors. Is thus essential for accurate translation. The polypeptide is Large ribosomal subunit protein bL12 (Acidovorax sp. (strain JS42)).